Here is a 1272-residue protein sequence, read N- to C-terminus: Myosin-binding protein C, cardiac-type (1272 aa).

Residues Lys95 to Phe147 are disordered. Residues Pro102–Leu117 are compositionally biased toward low complexity. The Ig-like C2-type 1 domain maps to Pro137–Ser252. At Ser265 the chain carries Phosphoserine; by PKA and PKC. Thr274 carries the phosphothreonine; by PKA and PKC modification. The residue at position 300 (Ser300) is a Phosphoserine; by PKA. Ig-like C2-type domains are found at residues Lys359 to Pro451, Pro452 to Lys542, Lys543 to Arg640, and Pro644 to Thr763. 2 Fibronectin type-III domains span residues Pro772–Pro868 and Glu870–Ile965. The Ig-like C2-type 6 domain occupies Pro969 to Thr1057. The Fibronectin type-III 3 domain occupies Pro1066 to Thr1161. A Phosphoserine; by PKC modification is found at Ser1169. The Ig-like C2-type 7 domain maps to Pro1179 to Glu1263.

Belongs to the immunoglobulin superfamily. MyBP family. In terms of processing, substrate for phosphorylation by PKA and PKC. Reversible phosphorylation appears to modulate contraction. Expressed specifically in cardiac muscle among adult tissues, but is also expressed transiently in the skeletal muscle at early developmental stages. Isoform Type I is found in embryonic skeletal muscle and isoform Type II is found in both embryonic skeletal and cardiac muscle.

Thick filament-associated protein located in the crossbridge region of vertebrate striated muscle A bands. In vitro it binds MHC, F-actin and native thin filaments, and modifies the activity of actin-activated myosin ATPase. It may modulate muscle contraction or may play a more structural role. May be involved in the early phase of myofibrillogenesis. This chain is Myosin-binding protein C, cardiac-type (MYBPC3), found in Gallus gallus (Chicken).